A 198-amino-acid polypeptide reads, in one-letter code: Recombination protein RecR (198 aa).

Residues 57-72 (CLNCGCLTDEAACYFC) form a C4-type zinc finger. A Toprim domain is found at 80 to 175 (QIICVTAFPR…QISRLAFGLP (96 aa)).

This sequence belongs to the RecR family.

May play a role in DNA repair. It seems to be involved in an RecBC-independent recombinational process of DNA repair. It may act with RecF and RecO. This Protochlamydia amoebophila (strain UWE25) protein is Recombination protein RecR.